The primary structure comprises 334 residues: Holliday junction branch migration complex subunit RuvB (334 aa).

Residues 4–186 (ADRLIAPENP…FGITQRLEYY (183 aa)) form a large ATPase domain (RuvB-L) region. ATP-binding positions include Ile-25, Arg-26, Gly-67, Lys-70, Thr-71, Thr-72, 133 to 135 (EDY), Arg-176, Tyr-186, and Arg-223. Thr-71 provides a ligand contact to Mg(2+). The segment at 187-257 (KVQDLQNIVQ…VADKALNMLD (71 aa)) is small ATPAse domain (RuvB-S). Positions 260-334 (AQGFDYMDRK…RAYLHFGIEK (75 aa)) are head domain (RuvB-H). DNA is bound by residues Arg-315 and Arg-320.

The protein belongs to the RuvB family. As to quaternary structure, homohexamer. Forms an RuvA(8)-RuvB(12)-Holliday junction (HJ) complex. HJ DNA is sandwiched between 2 RuvA tetramers; dsDNA enters through RuvA and exits via RuvB. An RuvB hexamer assembles on each DNA strand where it exits the tetramer. Each RuvB hexamer is contacted by two RuvA subunits (via domain III) on 2 adjacent RuvB subunits; this complex drives branch migration. In the full resolvosome a probable DNA-RuvA(4)-RuvB(12)-RuvC(2) complex forms which resolves the HJ.

It localises to the cytoplasm. The catalysed reaction is ATP + H2O = ADP + phosphate + H(+). In terms of biological role, the RuvA-RuvB-RuvC complex processes Holliday junction (HJ) DNA during genetic recombination and DNA repair, while the RuvA-RuvB complex plays an important role in the rescue of blocked DNA replication forks via replication fork reversal (RFR). RuvA specifically binds to HJ cruciform DNA, conferring on it an open structure. The RuvB hexamer acts as an ATP-dependent pump, pulling dsDNA into and through the RuvAB complex. RuvB forms 2 homohexamers on either side of HJ DNA bound by 1 or 2 RuvA tetramers; 4 subunits per hexamer contact DNA at a time. Coordinated motions by a converter formed by DNA-disengaged RuvB subunits stimulates ATP hydrolysis and nucleotide exchange. Immobilization of the converter enables RuvB to convert the ATP-contained energy into a lever motion, pulling 2 nucleotides of DNA out of the RuvA tetramer per ATP hydrolyzed, thus driving DNA branch migration. The RuvB motors rotate together with the DNA substrate, which together with the progressing nucleotide cycle form the mechanistic basis for DNA recombination by continuous HJ branch migration. Branch migration allows RuvC to scan DNA until it finds its consensus sequence, where it cleaves and resolves cruciform DNA. This is Holliday junction branch migration complex subunit RuvB from Vibrio parahaemolyticus serotype O3:K6 (strain RIMD 2210633).